The sequence spans 295 residues: Nucleotide-binding protein BPUM_3115 (295 aa).

16 to 23 (GMSGAGKT) is an ATP binding site. 67-70 (DLRG) is a GTP binding site.

This sequence belongs to the RapZ-like family.

Functionally, displays ATPase and GTPase activities. In Bacillus pumilus (strain SAFR-032), this protein is Nucleotide-binding protein BPUM_3115.